A 554-amino-acid chain; its full sequence is 3-(3-hydroxy-phenyl)propionate/3-hydroxycinnamic acid hydroxylase (554 aa).

FAD contacts are provided by residues 17–46 (QVAI…VVEK) and 285–295 (FRIDRVLLAGD).

Belongs to the PheA/TfdB FAD monooxygenase family. It depends on FAD as a cofactor.

The catalysed reaction is 3-(3-hydroxyphenyl)propanoate + NADH + O2 + H(+) = 3-(2,3-dihydroxyphenyl)propanoate + NAD(+) + H2O. It catalyses the reaction (2E)-3-(3-hydroxyphenyl)prop-2-enoate + NADH + O2 + H(+) = (2E)-3-(2,3-dihydroxyphenyl)prop-2-enoate + NAD(+) + H2O. Its pathway is aromatic compound metabolism; 3-phenylpropanoate degradation. Its function is as follows. Catalyzes the insertion of one atom of molecular oxygen into position 2 of the phenyl ring of 3-(3-hydroxyphenyl)propionate (3-HPP) and hydroxycinnamic acid (3HCI). This chain is 3-(3-hydroxy-phenyl)propionate/3-hydroxycinnamic acid hydroxylase, found in Escherichia coli O139:H28 (strain E24377A / ETEC).